The sequence spans 775 residues: Subtilisin-like protease SBT3.8 (775 aa).

Positions M1–A26 are cleaved as a signal peptide. A propeptide spans E27–D109 (activation peptide). The Inhibitor I9 domain maps to V30 to L108. The Peptidase S8 domain occupies T113 to A622. A glycan (N-linked (GlcNAc...) asparagine) is linked at N129. The Charge relay system role is filled by D143. N-linked (GlcNAc...) asparagine glycosylation is found at N174 and N202. H218 (charge relay system) is an active-site residue. Residues S384–L476 enclose the PA domain. Residues N395, N410, and N538 are each glycosylated (N-linked (GlcNAc...) asparagine). Residue S553 is the Charge relay system of the active site. N-linked (GlcNAc...) asparagine glycans are attached at residues N645, N721, and N756.

Belongs to the peptidase S8 family.

It localises to the secreted. The sequence is that of Subtilisin-like protease SBT3.8 from Arabidopsis thaliana (Mouse-ear cress).